The primary structure comprises 461 residues: Hydroxyproline dehydrogenase (461 aa).

The residue at position 310 (Lys310) is an N6-acetyllysine.

Belongs to the proline oxidase family. The cofactor is FAD.

The enzyme catalyses trans-4-hydroxy-L-proline + a quinone = (3R,5S)-1-pyrroline-3-hydroxy-5-carboxylate + a quinol + H(+). It catalyses the reaction L-proline + a quinone = (S)-1-pyrroline-5-carboxylate + a quinol + H(+). The protein operates within amino-acid degradation; L-proline degradation into L-glutamate; L-glutamate from L-proline: step 1/2. Functionally, dehydrogenase that converts trans-4-L-hydroxyproline to delta-1-pyrroline-3-hydroxy-5-carboxylate (Hyp) using ubiquinone-10 as the terminal electron acceptor. Can also use proline as a substrate but with a very much lower efficiency. Does not react with other diastereomers of Hyp: trans-4-D-hydroxyproline and cis-4-L-hydroxyproline. Ubiquininone analogs such as menadione, duroquinone and ubiquinone-1 react more efficiently than oxygen as the terminal electron acceptor during catalysis. This Bos taurus (Bovine) protein is Hydroxyproline dehydrogenase.